Here is a 201-residue protein sequence, read N- to C-terminus: 3-isopropylmalate dehydratase small subunit (201 aa).

Belongs to the LeuD family. LeuD type 1 subfamily. As to quaternary structure, heterodimer of LeuC and LeuD.

The catalysed reaction is (2R,3S)-3-isopropylmalate = (2S)-2-isopropylmalate. It functions in the pathway amino-acid biosynthesis; L-leucine biosynthesis; L-leucine from 3-methyl-2-oxobutanoate: step 2/4. Functionally, catalyzes the isomerization between 2-isopropylmalate and 3-isopropylmalate, via the formation of 2-isopropylmaleate. This is 3-isopropylmalate dehydratase small subunit from Mesorhizobium japonicum (strain LMG 29417 / CECT 9101 / MAFF 303099) (Mesorhizobium loti (strain MAFF 303099)).